We begin with the raw amino-acid sequence, 468 residues long: 6-phospho-beta-galactosidase 2 (468 aa).

Residues Gln-19, His-116, Asn-159, Glu-160, and Asn-297 each contribute to the D-galactose 6-phosphate site. The Proton donor role is filled by Glu-160. Glu-375 functions as the Nucleophile in the catalytic mechanism. Positions 428, 429, 435, and 437 each coordinate D-galactose 6-phosphate.

The protein belongs to the glycosyl hydrolase 1 family.

The catalysed reaction is a 6-phospho-beta-D-galactoside + H2O = D-galactose 6-phosphate + an alcohol. It functions in the pathway carbohydrate metabolism; lactose degradation; D-galactose 6-phosphate and beta-D-glucose from lactose 6-phosphate: step 1/1. In Streptococcus pneumoniae (strain ATCC BAA-255 / R6), this protein is 6-phospho-beta-galactosidase 2.